A 247-amino-acid polypeptide reads, in one-letter code: Probable dihydroorotate dehydrogenase B (NAD(+)), electron transfer subunit (247 aa).

Residues 1-87 (MLRRVMIKET…RGPYGNGFKS (87 aa)) form the FAD-binding FR-type domain. [2Fe-2S] cluster contacts are provided by C200, C205, C208, and C216.

Belongs to the PyrK family. In terms of assembly, heterotetramer of 2 PyrK and 2 PyrD type B subunits. The cofactor is [2Fe-2S] cluster. FAD is required as a cofactor.

It participates in pyrimidine metabolism; UMP biosynthesis via de novo pathway; orotate from (S)-dihydroorotate (NAD(+) route): step 1/1. Functionally, responsible for channeling the electrons from the oxidation of dihydroorotate from the FMN redox center in the PyrD type B subunit to the ultimate electron acceptor NAD(+). The chain is Probable dihydroorotate dehydrogenase B (NAD(+)), electron transfer subunit from Pyrococcus abyssi (strain GE5 / Orsay).